The following is a 108-amino-acid chain: Peptidyl-prolyl cis-trans isomerase FKBP1B (108 aa).

Residues 20–108 enclose the PPIase FKBP-type domain; that stretch reads GQICVVHYTG…IFDVELLSLE (89 aa).

Belongs to the FKBP-type PPIase family. FKBP1 subfamily. Identified in a complex composed of RYR2, FKBP1B, PKA catalytic subunit, PRKAR2A, AKAP6, and the protein phosphatases PP2A and PP1. Interacts directly with RYR2.

The protein resides in the cytoplasm. Its subcellular location is the sarcoplasmic reticulum. The catalysed reaction is [protein]-peptidylproline (omega=180) = [protein]-peptidylproline (omega=0). With respect to regulation, inhibited by both FK506 and rapamycin. Its function is as follows. Has the potential to contribute to the immunosuppressive and toxic effects of FK506 and rapamycin. PPIases accelerate the folding of proteins. It catalyzes the cis-trans isomerization of proline imidic peptide bonds in oligopeptides. In Mus musculus (Mouse), this protein is Peptidyl-prolyl cis-trans isomerase FKBP1B (Fkbp1b).